Consider the following 266-residue polypeptide: Undecaprenyl-diphosphatase (266 aa).

Helical transmembrane passes span 39–59 (PGASLSATIQLGSVIAIAYYF), 86–106 (SIFIGTIPIVLLGGSIKIFIP), 112–132 (VLRSNLSIALVSFLMAFFMYL), 147–167 (NFSNSFLIGIFQAFAIFPGVS), 189–209 (FSFLLGMPAISLAAIVEFVSS), 216–236 (LGFFPLFVGLITTFLSSLLAI), and 246–266 (NGLKIFIIYRVIFGVVILLNL).

This sequence belongs to the UppP family.

It is found in the cell inner membrane. It carries out the reaction di-trans,octa-cis-undecaprenyl diphosphate + H2O = di-trans,octa-cis-undecaprenyl phosphate + phosphate + H(+). In terms of biological role, catalyzes the dephosphorylation of undecaprenyl diphosphate (UPP). Confers resistance to bacitracin. This Prochlorococcus marinus (strain MIT 9301) protein is Undecaprenyl-diphosphatase.